The chain runs to 224 residues: Small ribosomal subunit protein uS3 (224 aa).

The KH type-2 domain maps to 39–107 (IREFLKKKPS…DVWVEIAEVK (69 aa)).

The protein belongs to the universal ribosomal protein uS3 family. As to quaternary structure, part of the 30S ribosomal subunit. Forms a tight complex with proteins S10 and S14.

Its function is as follows. Binds the lower part of the 30S subunit head. Binds mRNA in the 70S ribosome, positioning it for translation. The polypeptide is Small ribosomal subunit protein uS3 (Chlamydia trachomatis serovar A (strain ATCC VR-571B / DSM 19440 / HAR-13)).